The following is a 672-amino-acid chain: Methionine--tRNA ligase (672 aa).

A 'HIGH' region motif is present at residues 12–22; that stretch reads AYTNGPLHLGH. Zn(2+) contacts are provided by Cys144, Cys147, Cys156, and Cys159. Residues 330 to 334 carry the 'KMSKS' region motif; that stretch reads KMSTS. Thr333 lines the ATP pocket. The region spanning 573–672 is the tRNA-binding domain; the sequence is DFAKIELKVA…KDLPVGSTIC (100 aa).

This sequence belongs to the class-I aminoacyl-tRNA synthetase family. MetG type 1 subfamily. As to quaternary structure, homodimer. The cofactor is Zn(2+).

It localises to the cytoplasm. The enzyme catalyses tRNA(Met) + L-methionine + ATP = L-methionyl-tRNA(Met) + AMP + diphosphate. Functionally, is required not only for elongation of protein synthesis but also for the initiation of all mRNA translation through initiator tRNA(fMet) aminoacylation. The sequence is that of Methionine--tRNA ligase from Methanococcus aeolicus (strain ATCC BAA-1280 / DSM 17508 / OCM 812 / Nankai-3).